The following is a 182-amino-acid chain: Prorelaxin (182 aa).

The N-terminal stretch at 1–24 (MPRLFSYLLGVWLLLSQLPREIPG) is a signal peptide. Glutamine 25 is subject to Pyrrolidone carboxylic acid. Disulfide bonds link cysteine 34-cysteine 169, cysteine 46-cysteine 182, and cysteine 168-cysteine 173. Residues 57–154 (SLEEPQLETG…LKNLGLDKHS (98 aa)) constitute a propeptide, connecting peptide. Positions 159-160 (LF) are excised as a propeptide.

Belongs to the insulin family. As to quaternary structure, heterodimer of a B chain and an A chain linked by two disulfide bonds.

It is found in the secreted. Functionally, relaxin is an ovarian hormone that acts with estrogen to produce dilatation of the birth canal in many mammals. The polypeptide is Prorelaxin (RLN) (Sus scrofa (Pig)).